The following is a 1383-amino-acid chain: DNA-directed RNA polymerase subunit beta'' (1383 aa).

The Zn(2+) site is built by Cys-220, Cys-289, Cys-296, and Cys-299.

This sequence belongs to the RNA polymerase beta' chain family. RpoC2 subfamily. In terms of assembly, in plastids the minimal PEP RNA polymerase catalytic core is composed of four subunits: alpha, beta, beta', and beta''. When a (nuclear-encoded) sigma factor is associated with the core the holoenzyme is formed, which can initiate transcription. Zn(2+) is required as a cofactor.

The protein resides in the plastid. It localises to the chloroplast. The enzyme catalyses RNA(n) + a ribonucleoside 5'-triphosphate = RNA(n+1) + diphosphate. Functionally, DNA-dependent RNA polymerase catalyzes the transcription of DNA into RNA using the four ribonucleoside triphosphates as substrates. This is DNA-directed RNA polymerase subunit beta'' from Oenothera parviflora (Small-flowered evening primrose).